The primary structure comprises 529 residues: GTPase Obg (529 aa).

The Obg domain maps to 2–159 (ASFVDRVVLH…SDIVLELKSI (158 aa)). In terms of domain architecture, OBG-type G spans 160-343 (ADIALVGFPS…LGFAMAEIVK (184 aa)). Residues 166 to 173 (GFPSAGKS), 191 to 195 (FTTLI), 212 to 215 (DVPG), 295 to 298 (NKVD), and 324 to 326 (SAT) each bind GTP. Residues Ser-173 and Thr-193 each contribute to the Mg(2+) site. An OCT domain is found at 363–447 (PRAVNEAGFK…DDGVVFDWEP (85 aa)). Residues 466-502 (FADIGDRPTRGQKRDEQQERRDAKAAARAELEAERKA) show a composition bias toward basic and acidic residues. A disordered region spans residues 466-529 (FADIGDRPTR…ESGLTTENEE (64 aa)).

It belongs to the TRAFAC class OBG-HflX-like GTPase superfamily. OBG GTPase family. In terms of assembly, monomer. The cofactor is Mg(2+).

It localises to the cytoplasm. Functionally, an essential GTPase which binds GTP, GDP and possibly (p)ppGpp with moderate affinity, with high nucleotide exchange rates and a fairly low GTP hydrolysis rate. Plays a role in control of the cell cycle, stress response, ribosome biogenesis and in those bacteria that undergo differentiation, in morphogenesis control. The polypeptide is GTPase Obg (Arthrobacter sp. (strain FB24)).